Consider the following 381-residue polypeptide: Cobalt-precorrin-5B C(1)-methyltransferase (381 aa).

Belongs to the CbiD family.

The enzyme catalyses Co-precorrin-5B + S-adenosyl-L-methionine = Co-precorrin-6A + S-adenosyl-L-homocysteine. It functions in the pathway cofactor biosynthesis; adenosylcobalamin biosynthesis; cob(II)yrinate a,c-diamide from sirohydrochlorin (anaerobic route): step 6/10. Catalyzes the methylation of C-1 in cobalt-precorrin-5B to form cobalt-precorrin-6A. The chain is Cobalt-precorrin-5B C(1)-methyltransferase from Prochlorococcus marinus (strain NATL1A).